We begin with the raw amino-acid sequence, 741 residues long: Zinc finger and BTB domain-containing protein 20 (741 aa).

The span at 1-17 (MLERKKPKTAENQKASE) shows a compositional bias: basic and acidic residues. Residues 1–32 (MLERKKPKTAENQKASEENEITQPGGSSAKPG) are disordered. Positions 104–167 (CDVTVRIHGS…MYSGVLRVSQ (64 aa)) constitute a BTB domain. Residues 203 to 235 (GIQDSGQDTPRGTPESGTSGQSSDTESGYLQSH) are disordered. Residues 206–235 (DSGQDTPRGTPESGTSGQSSDTESGYLQSH) show a composition bias toward polar residues. The residue at position 211 (Thr-211) is a Phosphothreonine. Lys-330 participates in a covalent cross-link: Glycyl lysine isopeptide (Lys-Gly) (interchain with G-Cter in SUMO1); alternate. Residue Lys-330 forms a Glycyl lysine isopeptide (Lys-Gly) (interchain with G-Cter in SUMO2); alternate linkage. Positions 350–440 (RNESEECTED…SSPERSNEVE (91 aa)) are disordered. Ser-353 carries the post-translational modification Phosphoserine. Acidic residues predominate over residues 354–367 (EECTEDTDQAEGTE). Position 357 is a phosphothreonine (Thr-357). A Glycyl lysine isopeptide (Lys-Gly) (interchain with G-Cter in SUMO2) cross-link involves residue Lys-371. The span at 404 to 423 (AEPTQPEQAAEAPAEGGPQT) shows a compositional bias: low complexity. Residues 424–434 (NQLETGASSPE) show a composition bias toward polar residues. 4 C2H2-type zinc fingers span residues 578–600 (YECTLCNKTFTAKQNYVKHMFVH), 606–628 (HQCSICWRSFSLKDYLIKHMVTH), 634–656 (YQCSICNKRFTQKSSLNVHMRLH), and 662–684 (YECYICKKKFSHKTLLERHVALH). Thr-690 and Thr-695 each carry phosphothreonine. A C2H2-type 5 zinc finger spans residues 715-737 (YVCSVCPAKFDQIEQFNDHMRMH). Lys-723 is covalently cross-linked (Glycyl lysine isopeptide (Lys-Gly) (interchain with G-Cter in SUMO2)).

Can homodimerize. Binds to DNA. Post-translationally, sumoylated with SUMO1. Expressed in spleen, lymph node, thymus, peripheral blood leukocytes, and fetal liver.

The protein localises to the nucleus. Its function is as follows. May be a transcription factor that may be involved in hematopoiesis, oncogenesis, and immune responses. Plays a role in postnatal myogenesis, may be involved in the regulation of satellite cells self-renewal. The polypeptide is Zinc finger and BTB domain-containing protein 20 (ZBTB20) (Homo sapiens (Human)).